Consider the following 116-residue polypeptide: Protein Wnt-5a (116 aa).

Serine 1 carries O-palmitoleoyl serine; by PORCN lipidation. 2 N-linked (GlcNAc...) asparagine glycosylation sites follow: asparagine 69 and asparagine 83. Cysteine 82 and cysteine 97 are disulfide-bonded.

This sequence belongs to the Wnt family. Palmitoleoylation is required for efficient binding to frizzled receptors. Depalmitoleoylation leads to Wnt signaling pathway inhibition.

It is found in the secreted. It localises to the extracellular space. Its subcellular location is the extracellular matrix. In terms of biological role, ligand for members of the frizzled family of seven transmembrane receptors. Can activate or inhibit canonical Wnt signaling, depending on receptor context. Required during embryogenesis for extension of the primary anterior-posterior axis. This Plestiodon skiltonianus (Western skink) protein is Protein Wnt-5a (WNT-5A).